The following is a 618-amino-acid chain: Proline--tRNA ligase (618 aa).

It belongs to the class-II aminoacyl-tRNA synthetase family. ProS type 1 subfamily. In terms of assembly, homodimer.

It is found in the cytoplasm. It catalyses the reaction tRNA(Pro) + L-proline + ATP = L-prolyl-tRNA(Pro) + AMP + diphosphate. Its function is as follows. Catalyzes the attachment of proline to tRNA(Pro) in a two-step reaction: proline is first activated by ATP to form Pro-AMP and then transferred to the acceptor end of tRNA(Pro). As ProRS can inadvertently accommodate and process non-cognate amino acids such as alanine and cysteine, to avoid such errors it has two additional distinct editing activities against alanine. One activity is designated as 'pretransfer' editing and involves the tRNA(Pro)-independent hydrolysis of activated Ala-AMP. The other activity is designated 'posttransfer' editing and involves deacylation of mischarged Ala-tRNA(Pro). The misacylated Cys-tRNA(Pro) is not edited by ProRS. The chain is Proline--tRNA ligase from Streptococcus pyogenes serotype M4 (strain MGAS10750).